Here is an 84-residue protein sequence, read N- to C-terminus: Sulfur carrier protein TusA (84 aa).

C21 serves as the catalytic Cysteine persulfide intermediate.

It belongs to the sulfur carrier protein TusA family.

Its subcellular location is the cytoplasm. Sulfur carrier protein which probably makes part of a sulfur-relay system. The sequence is that of Sulfur carrier protein TusA from Pseudomonas syringae pv. syringae (strain B728a).